Consider the following 359-residue polypeptide: Glutamine synthetase (359 aa).

The 80-residue stretch at 28–107 (VMAEYIWIDG…VLAACYTADG (80 aa)) folds into the GS beta-grasp domain. The GS catalytic domain maps to 114-359 (HRDACAKLLE…GIITETMFEH (246 aa)). Ser273 carries the post-translational modification Phosphoserine. Thr303 is subject to Phosphothreonine. Ser305 carries the phosphoserine modification.

The protein belongs to the glutamine synthetase family. In terms of assembly, homooctamer.

Its subcellular location is the cytoplasm. The enzyme catalyses L-glutamate + NH4(+) + ATP = L-glutamine + ADP + phosphate + H(+). The protein is Glutamine synthetase (gln1) of Schizosaccharomyces pombe (strain 972 / ATCC 24843) (Fission yeast).